A 216-amino-acid polypeptide reads, in one-letter code: Uracil phosphoribosyltransferase (216 aa).

Residues R84, R109, and 137-145 (DPMLATGNT) contribute to the 5-phospho-alpha-D-ribose 1-diphosphate site. Uracil contacts are provided by residues I202 and 207–209 (GDA). D208 is a binding site for 5-phospho-alpha-D-ribose 1-diphosphate.

It belongs to the UPRTase family. The cofactor is Mg(2+).

The enzyme catalyses UMP + diphosphate = 5-phospho-alpha-D-ribose 1-diphosphate + uracil. It functions in the pathway pyrimidine metabolism; UMP biosynthesis via salvage pathway; UMP from uracil: step 1/1. Its activity is regulated as follows. Allosterically activated by GTP. In terms of biological role, catalyzes the conversion of uracil and 5-phospho-alpha-D-ribose 1-diphosphate (PRPP) to UMP and diphosphate. The sequence is that of Uracil phosphoribosyltransferase from Synechocystis sp. (strain ATCC 27184 / PCC 6803 / Kazusa).